Consider the following 151-residue polypeptide: MADADVDVGPVQPKKRTFKKFSYRGVDLDALLDMTSEELVKLFHARARRRFQRGLKRQPMALIKKLRKAKREAPSGEKPEPVRTHLRNMIIVPEMIGSIIGVYNGKTFNQVEIKPEMIGHYLAEFSISYKPVKHGRPGIGATHSSRFIPLK.

Belongs to the universal ribosomal protein uS19 family.

The protein is Small ribosomal subunit protein uS19 (RPS15) of Picea mariana (Black spruce).